The primary structure comprises 406 residues: 4-hydroxy-3-methylbut-2-en-1-yl diphosphate synthase (ferredoxin) (406 aa).

The [4Fe-4S] cluster site is built by C314, C317, C348, and E355.

This sequence belongs to the IspG family. The cofactor is [4Fe-4S] cluster.

The enzyme catalyses (2E)-4-hydroxy-3-methylbut-2-enyl diphosphate + 2 oxidized [2Fe-2S]-[ferredoxin] + H2O = 2-C-methyl-D-erythritol 2,4-cyclic diphosphate + 2 reduced [2Fe-2S]-[ferredoxin] + H(+). It participates in isoprenoid biosynthesis; isopentenyl diphosphate biosynthesis via DXP pathway; isopentenyl diphosphate from 1-deoxy-D-xylulose 5-phosphate: step 5/6. Converts 2C-methyl-D-erythritol 2,4-cyclodiphosphate (ME-2,4cPP) into 1-hydroxy-2-methyl-2-(E)-butenyl 4-diphosphate. The polypeptide is 4-hydroxy-3-methylbut-2-en-1-yl diphosphate synthase (ferredoxin) (Prochlorococcus marinus (strain MIT 9313)).